The chain runs to 402 residues: Argininosuccinate synthase (402 aa).

An ATP-binding site is contributed by 9–17 (AYSGGLDTS). Residue Tyr-86 participates in L-citrulline binding. Gly-116 provides a ligand contact to ATP. 3 residues coordinate L-aspartate: Thr-118, Asn-122, and Asp-123. Asn-122 contacts L-citrulline. L-citrulline-binding residues include Arg-126, Ser-174, Ser-183, Glu-259, and Tyr-271.

It belongs to the argininosuccinate synthase family. Type 1 subfamily. In terms of assembly, homotetramer.

The protein localises to the cytoplasm. The catalysed reaction is L-citrulline + L-aspartate + ATP = 2-(N(omega)-L-arginino)succinate + AMP + diphosphate + H(+). It functions in the pathway amino-acid biosynthesis; L-arginine biosynthesis; L-arginine from L-ornithine and carbamoyl phosphate: step 2/3. The polypeptide is Argininosuccinate synthase (Geobacillus sp. (strain WCH70)).